The chain runs to 295 residues: Pyridoxal 5'-phosphate synthase subunit PdxS (295 aa).

Residue aspartate 23 coordinates D-ribose 5-phosphate. The active-site Schiff-base intermediate with D-ribose 5-phosphate is lysine 80. Glycine 152 contacts D-ribose 5-phosphate. Arginine 164 contacts D-glyceraldehyde 3-phosphate. Residues glycine 213 and 234–235 (GS) contribute to the D-ribose 5-phosphate site.

This sequence belongs to the PdxS/SNZ family. In the presence of PdxT, forms a dodecamer of heterodimers.

It catalyses the reaction aldehydo-D-ribose 5-phosphate + D-glyceraldehyde 3-phosphate + L-glutamine = pyridoxal 5'-phosphate + L-glutamate + phosphate + 3 H2O + H(+). The protein operates within cofactor biosynthesis; pyridoxal 5'-phosphate biosynthesis. Catalyzes the formation of pyridoxal 5'-phosphate from ribose 5-phosphate (RBP), glyceraldehyde 3-phosphate (G3P) and ammonia. The ammonia is provided by the PdxT subunit. Can also use ribulose 5-phosphate and dihydroxyacetone phosphate as substrates, resulting from enzyme-catalyzed isomerization of RBP and G3P, respectively. This Methanosphaera stadtmanae (strain ATCC 43021 / DSM 3091 / JCM 11832 / MCB-3) protein is Pyridoxal 5'-phosphate synthase subunit PdxS.